Reading from the N-terminus, the 417-residue chain is Solanesyl diphosphate synthase 2, chloroplastic (417 aa).

The transit peptide at 1–60 (MMMSCRNIDLGTSVLDHSCSSSSTSRRFLFGNSSKTVCMIGGRSCVGNLVFLRRDLATCR) directs the protein to the chloroplast. The isopentenyl diphosphate site is built by Lys-137, Arg-140, and His-175. The Mg(2+) site is built by Asp-182 and Asp-186. Arg-191 is a binding site for an all-trans-polyprenyl diphosphate. Residue Arg-192 participates in isopentenyl diphosphate binding. An all-trans-polyprenyl diphosphate is bound by residues Lys-268, Thr-269, Gln-306, and Lys-323.

Belongs to the FPP/GGPP synthase family. In terms of assembly, homodimer. Interacts with FBN5. It depends on Mg(2+) as a cofactor. As to expression, higher expression in leaves than in roots.

Its subcellular location is the plastid. The protein resides in the chloroplast. The enzyme catalyses 5 isopentenyl diphosphate + (2E,6E,10E)-geranylgeranyl diphosphate = all-trans-nonaprenyl diphosphate + 5 diphosphate. In terms of biological role, involved in providing solanesyl diphosphate for plastoquinone-9 (PQ-9) formation in plastids. Catalyzes the elongation of the prenyl side chain of PQ-9 in plastids. Contributes to the biosynthesis of plastochromanol-8 (PC-8) in plastids. Does not contribute to the synthesis of tocopherol or ubiquinone. PQ-9 and PC-8 are lipophilic antioxidants that act as protectant against photooxidative stress under high light stress conditions. Prefers geranylgeranyl diphosphate to farnesyl diphosphate as substrate. No activity with geranyl diphosphate or dimethylallyl diphosphate as substrate. The sequence is that of Solanesyl diphosphate synthase 2, chloroplastic from Arabidopsis thaliana (Mouse-ear cress).